The primary structure comprises 419 residues: Double-stranded RNA-binding protein 1 (419 aa).

DRBM domains lie at Val-15–Lys-84 and Leu-101–Ser-170. The short motif at Lys-207 to Arg-222 is the Bipartite nuclear localization element. Tandem repeats lie at residues Glu-247 to Thr-274, Glu-275 to Thr-302, Glu-303 to Thr-330, Glu-331 to Thr-358, Glu-359 to Thr-386, and Glu-387 to Thr-414. Residues Glu-247 to Thr-414 form a 6 X 28 AA repeats of E-K-I-E-T-T-P-N-L-E-[PS]-[PS]-S-C-M-[NS]-G-L-K-E-A-A-F-G-S-V-E-T region.

Homodimer. Heterodimer with DRB2, DRB4 or DRB5. Interacts with SE and DCL1. Interacts with RCF3, RS40 and RS41. Expressed in rosette and cauline leaves, stems, roots, flowers and siliques.

It localises to the nucleus. It is found in the nucleus speckle. In terms of biological role, double-stranded RNA-binding protein involved in RNA-mediated post-transcriptional gene silencing (PTGS). Functions in the microRNAs (miRNAs) biogenesis by assisting DICER-LIKE 1 (DCL1) in the accurate processing from primary miRNAs (pri-miRNAs) to miRNAs in the nucleus. Forms a complex with SERRATE (SE) and DCL1 to promote accurate processing of pri-miRNAs by DCL1. Binds and assist DCL1 for accurate processing of precursor miRNAs (pre-miRNA). Indirectly involved in the production of trans-acting small interfering RNAs (ta-siRNAs) derived from the TAS1, TAS2 or TAS3 endogenous transcripts by participating in the production of their initiating miRNAs. Involved with argonaute 1 (AGO1) in the guide strand selection from miRNA duplexes, presumably by directional loading of the miRNA duplex (guide stand and passenger strand) onto the RNA-induced silencing complex (RISC) for passenger strand degradation. Does not participate in sense transgene-induced post-transcriptional gene silencing (S-PTGS). Involved in several plant development aspects and response to hormones through its role in miRNAs processing. The polypeptide is Double-stranded RNA-binding protein 1 (DRB1) (Arabidopsis thaliana (Mouse-ear cress)).